The following is a 105-amino-acid chain: Iron-sulfur cluster assembly protein CyaY (105 aa).

It belongs to the frataxin family.

Functionally, involved in iron-sulfur (Fe-S) cluster assembly. May act as a regulator of Fe-S biogenesis. The protein is Iron-sulfur cluster assembly protein CyaY of Psychromonas ingrahamii (strain DSM 17664 / CCUG 51855 / 37).